The following is a 1785-amino-acid chain: BCL-6 corepressor-like protein 1 (1785 aa).

3 disordered regions span residues 65–101 (VGSG…KMDY), 113–137 (VPLS…NSRA), and 343–368 (ASTP…GPPS). Residues 83 to 97 (KLGHKSEDKPDDPQP) show a composition bias toward basic and acidic residues. S496 is subject to Phosphoserine. Polar residues-rich tracts occupy residues 527–539 (PCTS…TTQP) and 586–600 (GTEQ…TFSP). Disordered regions lie at residues 527 to 550 (PCTS…PLAD) and 562 to 646 (PTPQ…PMPV). 2 positions are modified to phosphoserine: S599 and S613. Residue K747 forms a Glycyl lysine isopeptide (Lys-Gly) (interchain with G-Cter in SUMO2) linkage. Disordered regions lie at residues 753–781 (IIDQ…QPST), 876–901 (SSSE…EQDP), and 937–977 (VQPS…LKLA). Residues S1029 and S1033 each carry the phosphoserine modification. A Glycyl lysine isopeptide (Lys-Gly) (interchain with G-Cter in SUMO2) cross-link involves residue K1092. Disordered stretches follow at residues 1107-1293 (PDDV…QGRR) and 1312-1487 (WDTN…PEAR). A Phosphoserine modification is found at S1162. The span at 1176-1185 (VRGKHKHRKP) shows a compositional bias: basic residues. Basic and acidic residues predominate over residues 1195 to 1213 (KRADSHEEGSLEKKAKSSF). Residues 1222-1234 (STRTRSQSGSICS) show a composition bias toward polar residues. Basic and acidic residues predominate over residues 1271-1284 (TQRDTQYRSHHAQD). A compositionally biased stretch (acidic residues) spans 1314–1324 (TNEEEEEEEEE). A Nuclear localization signal motif is present at residues 1328-1336 (KRKKRRRQK). The span at 1328–1339 (KRKKRRRQKSRK) shows a compositional bias: basic residues. Over residues 1352-1363 (EQRRKGRADLKA) the composition is skewed to basic and acidic residues. Residues 1440–1449 (WSQQKTRSPK) are compositionally biased toward polar residues. Residues 1461–1480 (TPSKSRSASSEEASESPTAR) show a composition bias toward low complexity. A Phosphoserine modification is found at S1476. ANK repeat units lie at residues 1529–1558 (AGYT…NVNC), 1562–1591 (DGTR…DPTL), and 1595–1623 (SGQT…QGRA). The PCGF Ub-like fold domain (PUFD); required for the interaction with the KDM2B-SKP1 heterodimeric complex stretch occupies residues 1668-1785 (DDFMFELSDK…SEVEFQSCNS (118 aa)).

This sequence belongs to the BCOR family. Interacts with PCGF1, forming heterodimers. The PCGF1-BCORL1 heterodimeric complex interacts with the KDM2B-SKP1 heterodimeric complex to form a homotetrameric polycomb repression complex 1 (PRC1.1). Interacts with SKP1. Interacts with CTBP1, HDAC4, HDAC5 and HDAC7. In terms of tissue distribution, detected in testis and prostate. Detected at lower levels in peripheral blood leukocytes and spleen. Mainly expressed in the spermatogonia and primary spermatocytes.

The protein resides in the nucleus. In terms of biological role, transcriptional corepressor. May specifically inhibit gene expression when recruited to promoter regions by sequence-specific DNA-binding proteins such as BCL6. This repression may be mediated at least in part by histone deacetylase activities which can associate with this corepressor. In Homo sapiens (Human), this protein is BCL-6 corepressor-like protein 1.